Consider the following 722-residue polypeptide: MKKIICYFTIILLTFGIDAMEDNNKQIYNPKETKFLEEAAGAEALKWAKERTNKTEKALQAMQEYKRIKKEIESIFYDQRKTLYGVIRKGYVYNFWMDDKNPQGLWRRTLVDNYYKDKPNWEVLIDFDKLSKKIGKKVAYRGVSNCVQNPNRYLISMSFGGKDEMFFREWDLEKKDFVKNGFEPITSCGKLLEGKFTYPTWVNKDTIIFNPVLYKDEITSSLYPNSLYIWKRGEAIEKARKLFEVPKEYIRVSADKLLSDAISSSLIFISADKDFYNYDNYILDTQDKNFKLQKINMPSDATLQGSFKEYVFWLLRSDWKFKNHNIKAGSLVALHFTDLLKAESDKTSLKILFTPTENEVFNFIGTTKDRVFLATYDNVVSKVVTFTLENEQWTKPVILKLPYQNAIFRMSSYEDEEEALITIENAIVPPTIYLWVKTHELKVIRKALYSFDSENYVLEQKEATSFDGVKIPYFIVYKKGIKFDGKNPTLLEAYGGFQVINSPYFSRIKNEVWVKNGGVSVLANIRGGGEFGPEWHKAAQGIKRQTAFNDFFAVSEELIKQNITSPEYLGIKGGSNGGLLVSVAMTQRPELFGAIACEVPILDMIRYKEFGAGNSWVTEYGDPEIPNDLLHIKKYAPLENLSLTQKYPTVLITDSVLDQRVHPWHGRIFEYVLAQNPNTKTYFLESRDSGHSSGSDLKESANYFINLYTFFANTLKLKLIKF.

Catalysis depends on charge relay system residues serine 575, aspartate 658, and histidine 691.

This sequence belongs to the peptidase S9B family.

This is an uncharacterized protein from Rickettsia prowazekii (strain Madrid E).